The following is a 211-amino-acid chain: Chaperone protein TorD (211 aa).

It belongs to the TorD/DmsD family. TorD subfamily.

Its subcellular location is the cytoplasm. Involved in the biogenesis of TorA. Acts on TorA before the insertion of the molybdenum cofactor and, as a result, probably favors a conformation of the apoenzyme that is competent for acquiring the cofactor. The chain is Chaperone protein TorD from Shewanella loihica (strain ATCC BAA-1088 / PV-4).